A 119-amino-acid polypeptide reads, in one-letter code: Large ribosomal subunit protein uL18 (119 aa).

This sequence belongs to the universal ribosomal protein uL18 family. As to quaternary structure, part of the 50S ribosomal subunit; part of the 5S rRNA/L5/L18/L25 subcomplex. Contacts the 5S and 23S rRNAs.

Functionally, this is one of the proteins that bind and probably mediate the attachment of the 5S RNA into the large ribosomal subunit, where it forms part of the central protuberance. The chain is Large ribosomal subunit protein uL18 from Chlorobium phaeovibrioides (strain DSM 265 / 1930) (Prosthecochloris vibrioformis (strain DSM 265)).